The following is a 61-amino-acid chain: Photosystem II reaction center protein K (61 aa).

The propeptide occupies 1 to 24; sequence MPNILSLTCICFNSVIYPTSFFFA. The chain crosses the membrane as a helical span at residues 32 to 52; it reads IFNPIVDFMPVIPLFFFLLAF.

It belongs to the PsbK family. PSII is composed of 1 copy each of membrane proteins PsbA, PsbB, PsbC, PsbD, PsbE, PsbF, PsbH, PsbI, PsbJ, PsbK, PsbL, PsbM, PsbT, PsbX, PsbY, PsbZ, Psb30/Ycf12, at least 3 peripheral proteins of the oxygen-evolving complex and a large number of cofactors. It forms dimeric complexes.

Its subcellular location is the plastid. It is found in the chloroplast thylakoid membrane. Functionally, one of the components of the core complex of photosystem II (PSII). PSII is a light-driven water:plastoquinone oxidoreductase that uses light energy to abstract electrons from H(2)O, generating O(2) and a proton gradient subsequently used for ATP formation. It consists of a core antenna complex that captures photons, and an electron transfer chain that converts photonic excitation into a charge separation. The chain is Photosystem II reaction center protein K from Triticum aestivum (Wheat).